A 119-amino-acid chain; its full sequence is Small ribosomal subunit protein uS10 (119 aa).

It belongs to the universal ribosomal protein uS10 family. Component of the 40S small ribosomal subunit.

It localises to the cytoplasm. In terms of biological role, component of the small ribosomal subunit. The ribosome is a large ribonucleoprotein complex responsible for the synthesis of proteins in the cell. The protein is Small ribosomal subunit protein uS10 (rps20) of Xenopus laevis (African clawed frog).